Here is a 473-residue protein sequence, read N- to C-terminus: Adenosylhomocysteinase (473 aa).

Substrate is bound by residues 58 to 62 (HMTIQ), aspartate 135, and glutamate 197. 198–200 (TTT) contacts NAD(+). 2 residues coordinate substrate: lysine 227 and aspartate 231. Residues asparagine 232, valine 265, glutamate 284, asparagine 319, 340 to 342 (IGH), and asparagine 385 contribute to the NAD(+) site. Histidine 342 lines the substrate pocket. Residue histidine 392 coordinates substrate. NAD(+) contacts are provided by lysine 467 and tyrosine 471.

It belongs to the adenosylhomocysteinase family. Homotetramer; dimer of dimers. NAD(+) serves as cofactor.

The protein localises to the cytoplasm. It catalyses the reaction S-adenosyl-L-homocysteine + H2O = L-homocysteine + adenosine. It participates in amino-acid biosynthesis; L-homocysteine biosynthesis; L-homocysteine from S-adenosyl-L-homocysteine: step 1/1. May play a key role in the regulation of the intracellular concentration of adenosylhomocysteine, which is a strong inhibitor of SAM-dependent methyltransferases. Catalyzes the hydrolysis of S-adenosyl-L-homocysteine into L-homocysteine and adenosine. The protein is Adenosylhomocysteinase of Bradyrhizobium elkanii.